A 183-amino-acid chain; its full sequence is MSRIGNRVITVPSNVSVNQTKELLTVKGPLGQLDLKLKEGSKIKVNVENNEIRLTRGDELKQTKMLHGTYNALIKNALEGVTVGFKKELRLVGVGYRASLKDNVLNLQLGYSHPINLDIPKDLKVTVDKNTEITVSGIDKQKVGEFAIQIRKWRMPEPYKGKGVLYLNEQIIRKAGKTAEGKK.

This sequence belongs to the universal ribosomal protein uL6 family. As to quaternary structure, part of the 50S ribosomal subunit.

Its function is as follows. This protein binds to the 23S rRNA, and is important in its secondary structure. It is located near the subunit interface in the base of the L7/L12 stalk, and near the tRNA binding site of the peptidyltransferase center. This chain is Large ribosomal subunit protein uL6, found in Mycoplasmoides gallisepticum (strain R(low / passage 15 / clone 2)) (Mycoplasma gallisepticum).